Here is a 437-residue protein sequence, read N- to C-terminus: ATP-dependent protease ATPase subunit HslU (437 aa).

ATP-binding positions include V18, G60–E65, D250, E315, and R387.

It belongs to the ClpX chaperone family. HslU subfamily. As to quaternary structure, a double ring-shaped homohexamer of HslV is capped on each side by a ring-shaped HslU homohexamer. The assembly of the HslU/HslV complex is dependent on binding of ATP.

Its subcellular location is the cytoplasm. Functionally, ATPase subunit of a proteasome-like degradation complex; this subunit has chaperone activity. The binding of ATP and its subsequent hydrolysis by HslU are essential for unfolding of protein substrates subsequently hydrolyzed by HslV. HslU recognizes the N-terminal part of its protein substrates and unfolds these before they are guided to HslV for hydrolysis. In Desulfovibrio desulfuricans (strain ATCC 27774 / DSM 6949 / MB), this protein is ATP-dependent protease ATPase subunit HslU.